The chain runs to 258 residues: Deoxyribose-phosphate aldolase (258 aa).

D102 functions as the Proton donor/acceptor in the catalytic mechanism. Residue K165 is the Schiff-base intermediate with acetaldehyde of the active site. The active-site Proton donor/acceptor is the K199.

Belongs to the DeoC/FbaB aldolase family. DeoC type 2 subfamily.

The protein localises to the cytoplasm. The enzyme catalyses 2-deoxy-D-ribose 5-phosphate = D-glyceraldehyde 3-phosphate + acetaldehyde. It functions in the pathway carbohydrate degradation; 2-deoxy-D-ribose 1-phosphate degradation; D-glyceraldehyde 3-phosphate and acetaldehyde from 2-deoxy-alpha-D-ribose 1-phosphate: step 2/2. In terms of biological role, catalyzes a reversible aldol reaction between acetaldehyde and D-glyceraldehyde 3-phosphate to generate 2-deoxy-D-ribose 5-phosphate. The polypeptide is Deoxyribose-phosphate aldolase (Aliivibrio fischeri (strain MJ11) (Vibrio fischeri)).